We begin with the raw amino-acid sequence, 262 residues long: 4-hydroxy-tetrahydrodipicolinate reductase (262 aa).

9-14 (GCLGRM) contributes to the NAD(+) binding site. Residue R36 participates in NADP(+) binding. NAD(+)-binding positions include 100-102 (GTT) and 121-124 (SANM). The Proton donor/acceptor role is filled by H154. Position 155 (H155) interacts with (S)-2,3,4,5-tetrahydrodipicolinate. The Proton donor role is filled by K158. 164–165 (GT) contributes to the (S)-2,3,4,5-tetrahydrodipicolinate binding site.

It belongs to the DapB family.

The protein resides in the cytoplasm. It carries out the reaction (S)-2,3,4,5-tetrahydrodipicolinate + NAD(+) + H2O = (2S,4S)-4-hydroxy-2,3,4,5-tetrahydrodipicolinate + NADH + H(+). It catalyses the reaction (S)-2,3,4,5-tetrahydrodipicolinate + NADP(+) + H2O = (2S,4S)-4-hydroxy-2,3,4,5-tetrahydrodipicolinate + NADPH + H(+). It participates in amino-acid biosynthesis; L-lysine biosynthesis via DAP pathway; (S)-tetrahydrodipicolinate from L-aspartate: step 4/4. Functionally, catalyzes the conversion of 4-hydroxy-tetrahydrodipicolinate (HTPA) to tetrahydrodipicolinate. The polypeptide is 4-hydroxy-tetrahydrodipicolinate reductase (Wolbachia pipientis subsp. Culex pipiens (strain wPip)).